The following is a 147-amino-acid chain: Protein-export protein SecB (147 aa).

Belongs to the SecB family. In terms of assembly, homotetramer, a dimer of dimers. One homotetramer interacts with 1 SecA dimer.

It localises to the cytoplasm. Its function is as follows. One of the proteins required for the normal export of preproteins out of the cell cytoplasm. It is a molecular chaperone that binds to a subset of precursor proteins, maintaining them in a translocation-competent state. It also specifically binds to its receptor SecA. This is Protein-export protein SecB from Neisseria meningitidis serogroup B (strain ATCC BAA-335 / MC58).